Reading from the N-terminus, the 1032-residue chain is MGDIMRPIPFEELLTRIFDEYQQQRSIFGIPEQQFYSPVKGKTVSVFGETCATPVGPAAGPHTQLAQNIVTSWLTGGRFIELKTVQILDRLELEKPCIDAEDECFNTEWSTEFTLLKAWDEYLKAWFALHLLEAMFQPSDSGKSFIFNMSVGYNLEGIKQPPMQQFIDNMMDASDHPKFAQYRDTLNKLLQDDAFLARHGLQEKRESLQALPARIPTSMVHGVTLSTMHGCPPHEIEAICRYMLEEKGLNTFVKLNPTLLGYARVREILDVCGFGYIGLKEESFDHDLKLTQALEMLERLMALAKEKSLGFGVKLTNTLGTINNKGALPGEEMYMSGRALFPLSINVAAVLSRAFDGKLPISYSGGASQLTIRDIFDTGIRPITMATDLLKPGGYLRLSACMRELEGSDAWGLDHVDVERLNRLAADALTMEYTQKHWKPEERIEVAEDLPLTDCYVAPCVTACAIKQDIPEYIRLLGEHRYADALELIYQRNALPAITGHICDHQCQYNCTRLDYDSALNIRELKKVALEKGWDEYKQRWHKPAGSGSRHPVAVIGAGPAGLAAGYFLARAGHPVTLFEREANAGGVVKNIIPQFRIPAELIQHDIDFVAAHGVKFEYGCSPDLTIEQLKNQGFHYVLIATGTDKNSGVKLAGDNQNVWKSLPFLREYNKGTALKLGKHVVVVGAGNTAMDCARAALRVPGVEKATIVYRRSLQEMPAWREEYEEALHDGVEFRFLNNPERFDADGTLTLRVMSLGEPDEKGRRRPVETNETVTLLVDSLITAIGEQQDTEALNAMGVPLDKNGWPDVDHNGETRLTDVFMIGDVQRGPSSIVAAVGTARRATDAILSRENIRSHQNDKYWNNVNPAEIYQRKGDISITLVNSDDRDAFVAQEAARCLECNYVCSKCVDVCPNRANVSIAVPGFQNRFQTLHLDAYCNECGNCAQFCPWNGKPYKDKITVFSLAQDFDNSSNPGFLVEDCRVRVRLNNQSWVLNIDSKGQFNNVPPELNDMCRIISHVHQHHHYLLGRVEV.

Residues 928–958 form the 4Fe-4S ferredoxin-type domain; sequence RFQTLHLDAYCNECGNCAQFCPWNGKPYKDK. Residues cysteine 938, cysteine 941, cysteine 944, and cysteine 948 each coordinate [4Fe-4S] cluster.

[4Fe-4S] cluster is required as a cofactor.

Functionally, could be an iron-sulfur flavoprotein with NADPH:O(2) oxidoreductase activity. The sequence is that of Putative oxidoreductase YgfK (ygfK) from Escherichia coli (strain K12).